The primary structure comprises 338 residues: Anthranilate phosphoribosyltransferase (338 aa).

Residues G78, 81 to 82 (GD), S86, 88 to 91 (NIST), 106 to 114 (KHGNKSVTS), and S118 each bind 5-phospho-alpha-D-ribose 1-diphosphate. G78 provides a ligand contact to anthranilate. Residue S90 coordinates Mg(2+). Position 109 (N109) interacts with anthranilate. R163 is an anthranilate binding site. Residues D222 and E223 each coordinate Mg(2+).

The protein belongs to the anthranilate phosphoribosyltransferase family. As to quaternary structure, homodimer. It depends on Mg(2+) as a cofactor.

The enzyme catalyses N-(5-phospho-beta-D-ribosyl)anthranilate + diphosphate = 5-phospho-alpha-D-ribose 1-diphosphate + anthranilate. It participates in amino-acid biosynthesis; L-tryptophan biosynthesis; L-tryptophan from chorismate: step 2/5. In terms of biological role, catalyzes the transfer of the phosphoribosyl group of 5-phosphorylribose-1-pyrophosphate (PRPP) to anthranilate to yield N-(5'-phosphoribosyl)-anthranilate (PRA). The polypeptide is Anthranilate phosphoribosyltransferase (Staphylococcus saprophyticus subsp. saprophyticus (strain ATCC 15305 / DSM 20229 / NCIMB 8711 / NCTC 7292 / S-41)).